We begin with the raw amino-acid sequence, 89 residues long: ATP synthase subunit e, mitochondrial (89 aa).

N-acetylserine is present on S1. A helical membrane pass occupies residues 8 to 25 (YSSLAAGIVYGAYHTYTL).

F-type ATP synthases have 2 components, the catalytic core F(1) and the membrane-embedded component F(0), linked together by a central stalk and a peripheral stalk. The central stalk, also called rotor shaft, is often seen as part of F(1). The peripheral stalk is seen as part of F(0). F(0) contains the membrane channel next to the rotor. F-type ATP synthases form dimers but each monomer functions independently in ATP generation. The dimer consists of 18 different polypeptides: ATP1 (subunit alpha, part of F(1), 3 molecules per monomer), ATP2 (subunit beta, part of F(1), 3 molecules per monomer), ATP3 (subunit gamma, part of the central stalk), ATP4 (subunit b, part of the peripheral stalk), ATP5/OSCP (subunit 5/OSCP, part of the peripheral stalk), ATP6 (subunit a, part of the peripheral stalk), ATP7 (subunit d, part of the peripheral stalk), ATP8 (subunit 8, part of the peripheral stalk), OLI1 (subunit c, part of the rotor, 10 molecules per monomer), ATP14 (subunit h, part of the peripheral stalk), ATP15 (subunit epsilon, part of the central stalk), ATP16 (subunit delta, part of the central stalk), ATP17 (subunit f, part of the peripheral stalk), ATP18 (subunit i/j, part of the peripheral stalk). Dimer-specific subunits are ATP19 (subunit k, at interface between monomers), ATP20 (subunit g, at interface between monomers), TIM11 (subunit e, at interface between monomers). Also contains subunit L.

The protein resides in the mitochondrion inner membrane. In terms of biological role, mitochondrial membrane ATP synthase (F(1)F(0) ATP synthase or Complex V) produces ATP from ADP in the presence of a proton gradient across the membrane which is generated by electron transport complexes of the respiratory chain. F-type ATP synthases consist of two structural domains, F(1) - containing the extramembraneous catalytic core, and F(0) - containing the membrane proton channel, linked together by a central stalk and a peripheral stalk. During catalysis, ATP synthesis in the catalytic domain of F(1) is coupled via a rotary mechanism of the central stalk subunits to proton translocation. Part of the complex F(0) domain. Minor subunit located with subunit a/ATP6 in the membrane. Together with subunit g/ATP20, probably contributes to membrane curvature at the site of the ATP synthase dimer, ultimately contributing to formation of cristae. In Pichia angusta (Yeast), this protein is ATP synthase subunit e, mitochondrial.